The primary structure comprises 345 residues: NADPH dehydrogenase (345 aa).

Position 23 to 26 (23 to 26 (SPMC)) interacts with FMN. Tyr-28 contacts substrate. Ala-60 and Gln-102 together coordinate FMN. 164-167 (HGAH) provides a ligand contact to substrate. FMN-binding positions include Arg-215 and 307–308 (GR).

Belongs to the NADH:flavin oxidoreductase/NADH oxidase family. NamA subfamily. Homotetramer. FMN serves as cofactor.

The enzyme catalyses A + NADPH + H(+) = AH2 + NADP(+). Functionally, catalyzes the reduction of the double bond of an array of alpha,beta-unsaturated aldehydes and ketones. It also reduces the nitro group of nitroester and nitroaromatic compounds. It could have a role in detoxification processes. The sequence is that of NADPH dehydrogenase from Bacillus mycoides (strain KBAB4) (Bacillus weihenstephanensis).